The chain runs to 233 residues: Phytol kinase (233 aa).

Transmembrane regions (helical) follow at residues 9 to 29, 56 to 76, 96 to 118, 122 to 144, 172 to 192, and 213 to 233; these read MALP…AVVL, VVLI…AGVF, VGRH…GGFF, LPIF…ALVG, FLVT…VLVV, and NLTV…LWLG.

This sequence belongs to the polyprenol kinase family.

It localises to the cell membrane. It catalyses the reaction phytol + CTP = phytyl phosphate + CDP + H(+). It functions in the pathway cofactor biosynthesis; tocopherol biosynthesis. Its function is as follows. Catalyzes the CTP-dependent phosphorylation of phytol to phytylmonophosphate (PMP). Can also use UTP as an alternative phosphate donor, but not ATP or GTP. Is involved in tocopherol biosynthesis, via the utilization of phytol generated by chlorophyll degradation. Also plays a significant but not critical role in the recycling of phytol for the biosynthesis of new chlorophyll molecules. The chain is Phytol kinase from Synechocystis sp. (strain ATCC 27184 / PCC 6803 / Kazusa).